Here is a 1004-residue protein sequence, read N- to C-terminus: Unconventional myosin-Id (1004 aa).

In terms of domain architecture, Myosin motor spans 9–695 (FGKADFVLLD…TIFSLEEQRA (687 aa)). 102 to 109 (GESGAGKT) contributes to the ATP binding site. The tract at residues 572–594 (MISLVEKLASKEPYYVRCIKPND) is actin-binding. 2 IQ domains span residues 699-719 (KRIVLFLQKVWRGTLARMRYR) and 721-741 (MRAALIIIRAYRRYKVKSYIR). The region spanning 812-1003 (GQRADLGLQR…RSGYILSVPG (192 aa)) is the TH1 domain.

It belongs to the TRAFAC class myosin-kinesin ATPase superfamily. Myosin family. In terms of assembly, interacts (via the two IQ motifs) with calmodulin. Interacts with F-actin.

Its subcellular location is the cytoplasm. The protein resides in the perikaryon. The protein localises to the cell projection. It localises to the dendrite. It is found in the early endosome. Its subcellular location is the cell cortex. Functionally, unconventional myosin that functions as actin-based motor protein with ATPase activity. Plays a role in the formation of Kupffer's vesicle, an organ that functions as a left-right organizer during embryogenesis. Plays a role in vesicular trafficking events that are required for normal lumen expansion of Kupffer's vesicle. Required for normal orientation of cilia in Kupffer's vesicle, and thus for normal, unidirectional circular flow and normal angular flow velocity, which then mediates asymmetric gene expression and left-right asymmetric development. Plays a role in endosomal protein trafficking, and especially in the transfer of cargo proteins from early to recycling endosomes. Required for normal planar cell polarity in ciliated cells, for normal rotational polarity of cilia, and for coordinated, unidirectional ciliary movement. In Danio rerio (Zebrafish), this protein is Unconventional myosin-Id (myo1d).